Reading from the N-terminus, the 519-residue chain is AarF domain-containing protein kinase 1 (519 aa).

Residues 145-481 (SFEDTPLGAA…SLYRRVHISL (337 aa)) form the Protein kinase domain. ATP-binding positions include 151 to 159 (LGAASLAQV) and K173. D305 serves as the catalytic Proton acceptor.

It belongs to the protein kinase superfamily. ADCK protein kinase family.

It localises to the mitochondrion. Appears to be essential for maintaining mitochondrial cristae formation and mitochondrial function by acting via YME1L1 in a kinase-independent manner to regulate essential mitochondrial structural proteins OPA1 and IMMT. The action of this enzyme is not yet clear. It is not known if it has protein kinase activity and what type of substrate it would phosphorylate (Ser, Thr or Tyr). This is AarF domain-containing protein kinase 1 (ADCK1) from Gallus gallus (Chicken).